The following is a 379-amino-acid chain: GDSL esterase/lipase EXL2 (379 aa).

The N-terminal stretch at 1-35 (MKRNSINIHHVTSFSSSPFWCVFFLVLLCKTSTNA) is a signal peptide. N-linked (GlcNAc...) asparagine glycosylation is present at N42. Residue S54 is the Nucleophile of the active site. Active-site residues include D358 and H361.

Belongs to the 'GDSL' lipolytic enzyme family.

It localises to the secreted. The sequence is that of GDSL esterase/lipase EXL2 (EXL2) from Arabidopsis thaliana (Mouse-ear cress).